Consider the following 187-residue polypeptide: Troponin I, slow skeletal muscle (187 aa).

N-acetylproline is present on P2. The involved in binding TNC stretch occupies residues P2 to R48. S58 carries the post-translational modification Phosphoserine. The tract at residues L97–V118 is involved in binding TNC and actin.

Belongs to the troponin I family. Binds to actin and tropomyosin.

Its function is as follows. Troponin I is the inhibitory subunit of troponin, the thin filament regulatory complex which confers calcium-sensitivity to striated muscle actomyosin ATPase activity. The polypeptide is Troponin I, slow skeletal muscle (Tnni1) (Rattus norvegicus (Rat)).